We begin with the raw amino-acid sequence, 508 residues long: Steroid 17-alpha-hydroxylase/17,20 lyase (508 aa).

Asn-202 is a substrate binding site. Cys-442 serves as a coordination point for heme.

This sequence belongs to the cytochrome P450 family. Requires heme as cofactor.

It localises to the endoplasmic reticulum membrane. It is found in the microsome membrane. It catalyses the reaction a C21-steroid + reduced [NADPH--hemoprotein reductase] + O2 = a 17alpha-hydroxy-C21-steroid + oxidized [NADPH--hemoprotein reductase] + H2O + H(+). The enzyme catalyses progesterone + reduced [NADPH--hemoprotein reductase] + O2 = 17alpha-hydroxyprogesterone + oxidized [NADPH--hemoprotein reductase] + H2O + H(+). It carries out the reaction pregnenolone + reduced [NADPH--hemoprotein reductase] + O2 = 17alpha-hydroxypregnenolone + oxidized [NADPH--hemoprotein reductase] + H2O + H(+). The catalysed reaction is 17alpha-hydroxyprogesterone + reduced [NADPH--hemoprotein reductase] + O2 = androst-4-ene-3,17-dione + acetate + oxidized [NADPH--hemoprotein reductase] + H2O + 2 H(+). It catalyses the reaction 17alpha-hydroxyprogesterone + reduced [NADPH--hemoprotein reductase] + O2 = 16alpha,17alpha-dihydroxyprogesterone + oxidized [NADPH--hemoprotein reductase] + H2O + H(+). The enzyme catalyses 16alpha,17alpha-dihydroxyprogesterone + reduced [NADPH--hemoprotein reductase] + O2 = 6beta,16alpha,17alpha-trihydroxyprogesterone + oxidized [NADPH--hemoprotein reductase] + H2O + H(+). It carries out the reaction 17alpha-hydroxypregnenolone + reduced [NADPH--hemoprotein reductase] + O2 = 3beta-hydroxyandrost-5-en-17-one + acetate + oxidized [NADPH--hemoprotein reductase] + H2O + 2 H(+). The catalysed reaction is 16alpha,17alpha-dihydroxypregnenolone + reduced [NADPH--hemoprotein reductase] + O2 = 3beta,16alpha-dihydroxy-androst-5-en-17-one + acetate + oxidized [NADPH--hemoprotein reductase] + H2O + 2 H(+). It catalyses the reaction 3beta-hydroxyandrost-5-en-17-one + reduced [NADPH--hemoprotein reductase] + O2 = 3beta,16alpha-dihydroxy-androst-5-en-17-one + oxidized [NADPH--hemoprotein reductase] + H2O + H(+). The enzyme catalyses androst-4-ene-3,17-dione + reduced [NADPH--hemoprotein reductase] + O2 = 16alpha-hydroxyandrost-4-ene-3,17-dione + oxidized [NADPH--hemoprotein reductase] + H2O + H(+). Its pathway is steroid hormone biosynthesis. It participates in steroid biosynthesis; glucocorticoid biosynthesis. Regulated predominantly by intracellular cAMP levels. The 17,20-lyase activity is stimulated by cytochrome b5, which acts as an allosteric effector increasing the Vmax of the lyase activity. In terms of biological role, a cytochrome P450 monooxygenase involved in corticoid and androgen biosynthesis. Catalyzes 17-alpha hydroxylation of C21 steroids, which is common for both pathways. A second oxidative step, required only for androgen synthesis, involves an acyl-carbon cleavage. The 17-alpha hydroxy intermediates, as part of adrenal glucocorticoids biosynthesis pathway, are precursors of cortisol. Hydroxylates steroid hormones, pregnenolone and progesterone to form 17-alpha hydroxy metabolites, followed by the cleavage of the C17-C20 bond to form C19 steroids, dehydroepiandrosterone (DHEA) and androstenedione. Has 16-alpha hydroxylase activity. Catalyzes 16-alpha hydroxylation of 17-alpha hydroxy pregnenolone, followed by the cleavage of the C17-C20 bond to form 16-alpha-hydroxy DHEA. Also 16-alpha hydroxylates androgens, relevant for estriol synthesis. Mechanistically, uses molecular oxygen inserting one oxygen atom into a substrate, and reducing the second into a water molecule, with two electrons provided by NADPH via cytochrome P450 reductase (CPR; NADPH-ferrihemoprotein reductase). The chain is Steroid 17-alpha-hydroxylase/17,20 lyase (CYP17A1) from Papio cynocephalus (Yellow baboon).